The chain runs to 299 residues: ATP phosphoribosyltransferase (299 aa).

Belongs to the ATP phosphoribosyltransferase family. Long subfamily. It depends on Mg(2+) as a cofactor.

It localises to the cytoplasm. The enzyme catalyses 1-(5-phospho-beta-D-ribosyl)-ATP + diphosphate = 5-phospho-alpha-D-ribose 1-diphosphate + ATP. It functions in the pathway amino-acid biosynthesis; L-histidine biosynthesis; L-histidine from 5-phospho-alpha-D-ribose 1-diphosphate: step 1/9. Feedback inhibited by histidine. In terms of biological role, catalyzes the condensation of ATP and 5-phosphoribose 1-diphosphate to form N'-(5'-phosphoribosyl)-ATP (PR-ATP). Has a crucial role in the pathway because the rate of histidine biosynthesis seems to be controlled primarily by regulation of HisG enzymatic activity. This is ATP phosphoribosyltransferase from Shewanella piezotolerans (strain WP3 / JCM 13877).